A 141-amino-acid polypeptide reads, in one-letter code: Lutropin subunit beta (141 aa).

The signal sequence occupies residues 1-20; sequence MERLQGLLLWLLLSPSVVWA. Disulfide bonds link Cys29–Cys77, Cys43–Cys92, Cys46–Cys130, Cys54–Cys108, Cys58–Cys110, and Cys113–Cys120. N-linked (GlcNAc...) asparagine glycosylation is present at Asn33.

Belongs to the glycoprotein hormones subunit beta family. In terms of assembly, heterodimer of a common alpha chain and a unique beta chain which confers biological specificity to thyrotropin, lutropin, follitropin and gonadotropin.

The protein localises to the secreted. Its function is as follows. Promotes spermatogenesis and ovulation by stimulating the testes and ovaries to synthesize steroids. In Rattus norvegicus (Rat), this protein is Lutropin subunit beta (Lhb).